The chain runs to 89 residues: Small ribosomal subunit protein uS15 (89 aa).

Belongs to the universal ribosomal protein uS15 family. In terms of assembly, part of the 30S ribosomal subunit. Forms a bridge to the 50S subunit in the 70S ribosome, contacting the 23S rRNA.

Functionally, one of the primary rRNA binding proteins, it binds directly to 16S rRNA where it helps nucleate assembly of the platform of the 30S subunit by binding and bridging several RNA helices of the 16S rRNA. In terms of biological role, forms an intersubunit bridge (bridge B4) with the 23S rRNA of the 50S subunit in the ribosome. This Shewanella woodyi (strain ATCC 51908 / MS32) protein is Small ribosomal subunit protein uS15.